A 488-amino-acid polypeptide reads, in one-letter code: Ribulose bisphosphate carboxylase large chain (488 aa).

Substrate is bound by residues N127 and T177. K179 acts as the Proton acceptor in catalysis. K181 serves as a coordination point for substrate. The Mg(2+) site is built by K205, D207, and E208. N6-carboxylysine is present on K205. H297 (proton acceptor) is an active-site residue. Positions 298, 330, and 382 each coordinate substrate.

This sequence belongs to the RuBisCO large chain family. Type I subfamily. In terms of assembly, heterohexadecamer of 8 large chains and 8 small chains. Mg(2+) serves as cofactor.

It is found in the plastid. The protein localises to the chloroplast. It catalyses the reaction 2 (2R)-3-phosphoglycerate + 2 H(+) = D-ribulose 1,5-bisphosphate + CO2 + H2O. The catalysed reaction is D-ribulose 1,5-bisphosphate + O2 = 2-phosphoglycolate + (2R)-3-phosphoglycerate + 2 H(+). In terms of biological role, ruBisCO catalyzes two reactions: the carboxylation of D-ribulose 1,5-bisphosphate, the primary event in carbon dioxide fixation, as well as the oxidative fragmentation of the pentose substrate in the photorespiration process. Both reactions occur simultaneously and in competition at the same active site. This is Ribulose bisphosphate carboxylase large chain from Pyropia yezoensis (Susabi-nori).